A 346-amino-acid polypeptide reads, in one-letter code: Biotin synthase (346 aa).

The region spanning 38–256 is the Radical SAM core domain; sequence RQVQVSTLLS…IAVARIMMPT (219 aa). 3 residues coordinate [4Fe-4S] cluster: Cys-53, Cys-57, and Cys-60. [2Fe-2S] cluster contacts are provided by Cys-97, Cys-128, Cys-188, and Arg-260.

This sequence belongs to the radical SAM superfamily. Biotin synthase family. In terms of assembly, homodimer. The cofactor is [4Fe-4S] cluster. Requires [2Fe-2S] cluster as cofactor.

It carries out the reaction (4R,5S)-dethiobiotin + (sulfur carrier)-SH + 2 reduced [2Fe-2S]-[ferredoxin] + 2 S-adenosyl-L-methionine = (sulfur carrier)-H + biotin + 2 5'-deoxyadenosine + 2 L-methionine + 2 oxidized [2Fe-2S]-[ferredoxin]. It participates in cofactor biosynthesis; biotin biosynthesis; biotin from 7,8-diaminononanoate: step 2/2. Functionally, catalyzes the conversion of dethiobiotin (DTB) to biotin by the insertion of a sulfur atom into dethiobiotin via a radical-based mechanism. This Escherichia fergusonii (strain ATCC 35469 / DSM 13698 / CCUG 18766 / IAM 14443 / JCM 21226 / LMG 7866 / NBRC 102419 / NCTC 12128 / CDC 0568-73) protein is Biotin synthase.